The primary structure comprises 1137 residues: Receptor-type guanylate cyclase gcy-1 (1137 aa).

A signal peptide spans 1–18; sequence MQIFTILLLFNIFPSIFV. Residues 19–494 are Extracellular-facing; the sequence is QNLPDTTVAP…CPVSFWEQYK (476 aa). N-linked (GlcNAc...) asparagine glycosylation is found at Asn-219, Asn-348, Asn-358, Asn-384, Asn-417, and Asn-451. A helical membrane pass occupies residues 495 to 515; that stretch reads ILIFVAIAVIVLMVLIMIIGC. At 516-1137 the chain is on the cytoplasmic side; it reads LCVISGKRAE…FKMDTLKVAN (622 aa). The Protein kinase domain maps to 557–826; the sequence is LQSAPSISTG…ENICSQMKGL (270 aa). Positions 840–871 form a coiled coil; it reads NMLEEYTSTLEEEIEERTKELTLEKKKADILL. Residues 898–1028 form the Guanylate cyclase domain; that stretch reads TVFFSDVVKF…DTVNTASRME (131 aa). The segment at 1086-1122 is disordered; the sequence is ELRSISNRSTPPVTNDRWIPNPSSSHGSRPSSVYDPL. Residues 1088 to 1098 show a composition bias toward polar residues; the sequence is RSISNRSTPPV. Positions 1105 to 1117 are enriched in low complexity; it reads PNPSSSHGSRPSS.

Belongs to the adenylyl cyclase class-4/guanylyl cyclase family. As to expression, expressed predominantly in sensory neurons. Expressed asymmetrically in the right ASE (ASER) neuron and bilaterally in ASI and URX neurons. Expressed in PVT and bilaterally in AIY non-sensory neurons. Expressed in intestine.

The protein resides in the membrane. It carries out the reaction GTP = 3',5'-cyclic GMP + diphosphate. Its function is as follows. Guanylate cyclase involved in the production of the second messenger cGMP. Involved in the sensing of K+ gradient by the ASE right (ASER) sensory neuron. The protein is Receptor-type guanylate cyclase gcy-1 (gcy-1) of Caenorhabditis elegans.